Reading from the N-terminus, the 350-residue chain is Transmembrane protein 185A (350 aa).

Helical transmembrane passes span leucine 16–isoleucine 36, tryptophan 41–glycine 61, phenylalanine 81–valine 101, phenylalanine 111–valine 131, isoleucine 177–leucine 197, isoleucine 211–leucine 231, and alanine 240–threonine 260. The segment at aspartate 298–aspartate 350 is mediates interaction with MAP1B.

Belongs to the TMEM185 family. In terms of assembly, interacts with MAP1B. Broadly expressed in brain where it is specifically expressed by neurons (at protein level). Also detected in some cells of arterioles, intestine, lung and testis (at protein level).

Its subcellular location is the cell projection. The protein localises to the dendrite. The protein resides in the membrane. In Mus musculus (Mouse), this protein is Transmembrane protein 185A (Tmem185a).